Reading from the N-terminus, the 664-residue chain is Alpha-1,4-glucan:maltose-1-phosphate maltosyltransferase (664 aa).

Positions 261, 321, and 356 each coordinate alpha-maltose 1-phosphate. Asp393 functions as the Nucleophile in the catalytic mechanism. Asn394 contributes to the alpha-maltose 1-phosphate binding site. Glu422 serves as the catalytic Proton donor. Residue 533 to 534 (KY) participates in alpha-maltose 1-phosphate binding.

Belongs to the glycosyl hydrolase 13 family. GlgE subfamily. In terms of assembly, homodimer.

It carries out the reaction alpha-maltose 1-phosphate + [(1-&gt;4)-alpha-D-glucosyl](n) = [(1-&gt;4)-alpha-D-glucosyl](n+2) + phosphate. Maltosyltransferase that uses maltose 1-phosphate (M1P) as the sugar donor to elongate linear or branched alpha-(1-&gt;4)-glucans. Is involved in a branched alpha-glucan biosynthetic pathway from trehalose, together with TreS, Mak and GlgB. The protein is Alpha-1,4-glucan:maltose-1-phosphate maltosyltransferase of Pseudomonas aeruginosa (strain ATCC 15692 / DSM 22644 / CIP 104116 / JCM 14847 / LMG 12228 / 1C / PRS 101 / PAO1).